The chain runs to 79 residues: Pyridoxal 5'-phosphate synthase PDX1-like 4 (79 aa).

It belongs to the PdxS/SNZ family.

In Arabidopsis thaliana (Mouse-ear cress), this protein is Pyridoxal 5'-phosphate synthase PDX1-like 4 (PDX1L4).